Consider the following 213-residue polypeptide: AVPQSIDWRDYGAVNEVKNQGPCGGCWAFAAIATVEGIYKIRKGNLVYLSEQEVLDCAVSYGCKGGWVNRAYDFIISNNGVTTDENYPYRAYQGTCNANYFPNSAYITGYSYVRRNDESHMMYAVSNQPIAALIDASGDNFQYYKGGVYSGPCGFSLNHAITIIGYGRDSYWIVRNSWGSSWGQGGYVRIRRDVSHSGGVCGIAMSPLFPTLQ.

Disulfide bonds link C23-C63, C57-C96, and C153-C201. Residue C26 is part of the active site. Catalysis depends on residues H159 and N176.

As to quaternary structure, monomer. As to expression, fruits.

Its activity is regulated as follows. Inhibited by the general cysteine protease inhibitor E64 (L-trans-epoxysuccinyl-leucylamide-(4-guanido)-butane). Functionally, cysteine protease that catalyzes the preferential cleavage: Ala-|-Xaa &gt; Gln-|-Xaa &gt; Tyr-Xaa &gt;&gt; Leu-|-Xaa &gt; Gly-|-Xaa. Hydrolyzes the synthetic peptide substrate Bz-Phe-Val-Arg-pNA. This is Macrodontain-1 from Ananas macrodontes (False pineapple).